The sequence spans 817 residues: Protein EFR3 homolog B (817 aa).

Phosphoserine is present on residues S212, S214, and S216.

It belongs to the EFR3 family. Component of a phosphatidylinositol 4-kinase (PI4K) complex, composed of PI4KA, EFR3 (EFR3A or EFR3B), TTC7 (TTC7A or TTC7B) and HYCC (HYCC1 or HYCC2). In terms of processing, palmitoylated at its N-terminus, anchoring the protein to the plasma membrane. As to expression, widely expressed.

It is found in the cell membrane. The protein localises to the cytoplasm. Its subcellular location is the cytosol. Functionally, component of a complex required to localize phosphatidylinositol 4-kinase (PI4K) to the plasma membrane. The complex acts as a regulator of phosphatidylinositol 4-phosphate (PtdIns(4)P) synthesis. In the complex, EFR3B probably acts as the membrane-anchoring component. Also involved in responsiveness to G-protein-coupled receptors; it is however unclear whether this role is direct or indirect. This is Protein EFR3 homolog B (Efr3b) from Mus musculus (Mouse).